We begin with the raw amino-acid sequence, 247 residues long: Protein At-4/1 (247 aa).

2 coiled-coil regions span residues 39–126 (VESS…YKIR) and 182–247 (LLME…LSSS).

As to quaternary structure, interacts with viral tomato spotted wilt virus (TSWV) movement protein NSM, which is involved in cell-to cell spread of viral genome and enlargement of the host plasmodesmata size exclusion limit (SEL). As to expression, expressed in leaves (at protein level).

It is found in the endoplasmic reticulum. It localises to the cell junction. Its subcellular location is the plasmodesma. Functionally, involved in intra- and inter-cellular trafficking through plasmodesmata (PD). The chain is Protein At-4/1 from Arabidopsis thaliana (Mouse-ear cress).